The sequence spans 276 residues: Formamidopyrimidine-DNA glycosylase (276 aa).

Residue Pro2 is the Schiff-base intermediate with DNA of the active site. The active-site Proton donor is Glu3. Lys60 acts as the Proton donor; for beta-elimination activity in catalysis. Residues His93 and Arg112 each contribute to the DNA site. The FPG-type zinc finger occupies 240 to 274; sequence NVYGKKGEPCVTCGTILEKTVVGGRGTHYCPICQP. Residue Arg264 is the Proton donor; for delta-elimination activity of the active site.

The protein belongs to the FPG family. As to quaternary structure, monomer. Requires Zn(2+) as cofactor.

The catalysed reaction is Hydrolysis of DNA containing ring-opened 7-methylguanine residues, releasing 2,6-diamino-4-hydroxy-5-(N-methyl)formamidopyrimidine.. It catalyses the reaction 2'-deoxyribonucleotide-(2'-deoxyribose 5'-phosphate)-2'-deoxyribonucleotide-DNA = a 3'-end 2'-deoxyribonucleotide-(2,3-dehydro-2,3-deoxyribose 5'-phosphate)-DNA + a 5'-end 5'-phospho-2'-deoxyribonucleoside-DNA + H(+). In terms of biological role, involved in base excision repair of DNA damaged by oxidation or by mutagenic agents. Acts as a DNA glycosylase that recognizes and removes damaged bases. Has a preference for oxidized purines, such as 7,8-dihydro-8-oxoguanine (8-oxoG). Has AP (apurinic/apyrimidinic) lyase activity and introduces nicks in the DNA strand. Cleaves the DNA backbone by beta-delta elimination to generate a single-strand break at the site of the removed base with both 3'- and 5'-phosphates. This chain is Formamidopyrimidine-DNA glycosylase, found in Bacillus anthracis.